Reading from the N-terminus, the 154-residue chain is Large-conductance mechanosensitive channel (154 aa).

2 helical membrane passes run 14-34 and 86-106; these read VVDL…VNSL and VFIN…FFVV.

It belongs to the MscL family. Homopentamer.

The protein resides in the cell membrane. Its function is as follows. Channel that opens in response to stretch forces in the membrane lipid bilayer. May participate in the regulation of osmotic pressure changes within the cell. In Dehalococcoides mccartyi (strain ATCC BAA-2100 / JCM 16839 / KCTC 5957 / BAV1), this protein is Large-conductance mechanosensitive channel.